A 68-amino-acid polypeptide reads, in one-letter code: U19-ctenitoxin-Pn1a (68 aa).

The residue at position 1 (Gln1) is a Pyrrolidone carboxylic acid. 5 disulfide bridges follow: Cys8–Cys19, Cys13–Cys28, Cys18–Cys51, Cys38–Cys59, and Cys53–Cys65.

In terms of tissue distribution, expressed by the venom gland.

It is found in the secreted. Its function is as follows. Non-toxic to mice and insects. The chain is U19-ctenitoxin-Pn1a from Phoneutria nigriventer (Brazilian armed spider).